The primary structure comprises 208 residues: MLQRLNCLLMQAGIVITDTQKTQLVQLVELLHKWNKAYNLTSVRDPDAMLVKHILDSLVVSPHLHGERFIDVGTGPGLPGLPLAIINPDKQFVLLDSLGKRINFIRQVIQVLGLTNVTPVKSRVEEYQPDVGFDCVLSRAFASLEDMLSWCHHLPSEQGSFLALKGQYPEQELAQLPANIRLVACHELRVPELEGERHLLEFKHIQPE.

Residues G73, L78, 124–125 (VE), and R139 contribute to the S-adenosyl-L-methionine site.

This sequence belongs to the methyltransferase superfamily. RNA methyltransferase RsmG family.

The protein resides in the cytoplasm. It carries out the reaction guanosine(527) in 16S rRNA + S-adenosyl-L-methionine = N(7)-methylguanosine(527) in 16S rRNA + S-adenosyl-L-homocysteine. Functionally, specifically methylates the N7 position of guanine in position 527 of 16S rRNA. The chain is Ribosomal RNA small subunit methyltransferase G from Aeromonas salmonicida (strain A449).